Reading from the N-terminus, the 1427-residue chain is DNA-directed RNA polymerase subunit beta' (1427 aa).

Positions 70, 72, 85, and 88 each coordinate Zn(2+). Mg(2+) contacts are provided by D461, D463, and D465. Residues C810, C884, C891, and C894 each coordinate Zn(2+). Disordered stretches follow at residues 1044-1065 and 1394-1427; these read QTDEATGMSSRVVTENRAAGRG and PEAAIGDDPLATVEGETHGTDADAGDYLIEGDEA.

This sequence belongs to the RNA polymerase beta' chain family. As to quaternary structure, the RNAP catalytic core consists of 2 alpha, 1 beta, 1 beta' and 1 omega subunit. When a sigma factor is associated with the core the holoenzyme is formed, which can initiate transcription. Requires Mg(2+) as cofactor. The cofactor is Zn(2+).

The enzyme catalyses RNA(n) + a ribonucleoside 5'-triphosphate = RNA(n+1) + diphosphate. Functionally, DNA-dependent RNA polymerase catalyzes the transcription of DNA into RNA using the four ribonucleoside triphosphates as substrates. In Novosphingobium aromaticivorans (strain ATCC 700278 / DSM 12444 / CCUG 56034 / CIP 105152 / NBRC 16084 / F199), this protein is DNA-directed RNA polymerase subunit beta'.